The following is a 402-amino-acid chain: Caspase-1 (402 aa).

In terms of domain architecture, CARD spans 1–91; sequence MADKVLRAKR…YLAEILELQS (91 aa). Residues 1–118 constitute a propeptide that is removed on maturation; the sequence is MADKVLRAKR…PFSSETKEKL (118 aa). Catalysis depends on residues His236 and Cys284. The propeptide occupies 297–314; sequence SVGNSEEGFLTDAIFEDD. Ser301 is modified (phosphoserine).

The protein belongs to the peptidase C14A family. In terms of assembly, heterotetramer that consists of two anti-parallel arranged heterodimers, each one formed by a 20 kDa (Caspase-1 subunit p20) and a 10 kDa (Caspase-1 subunit p10) subunit. May be a component of the inflammasome, a protein complex which also includes PYCARD, CARD8 and NLRP2 and whose function would be the activation of pro-inflammatory caspases. Component of the AIM2 PANoptosome complex, a multiprotein complex that drives inflammatory cell death (PANoptosis). Both the p10 and p20 subunits interact with MEFV. Interacts with CARD17P/INCA and CARD18. Interacts with SERPINB1; this interaction regulates CASP1 activity. As to quaternary structure, heterotetramer that consists of two anti-parallel arranged heterodimers, each one formed by a 20 kDa (Caspase-1 subunit p20) and a 10 kDa (Caspase-1 subunit p10) subunit. The two subunits are derived from the precursor sequence by an autocatalytic mechanism. Post-translationally, ubiquitinated via 'Lys-11'-linked polyubiquitination. Deubiquitinated by USP8.

The protein localises to the cytoplasm. It localises to the cell membrane. It catalyses the reaction Strict requirement for an Asp residue at position P1 and has a preferred cleavage sequence of Tyr-Val-Ala-Asp-|-.. Functionally, thiol protease involved in a variety of inflammatory processes by proteolytically cleaving other proteins, such as the precursors of the inflammatory cytokines interleukin-1 beta (IL1B) and interleukin 18 (IL18) as well as the pyroptosis inducer Gasdermin-D (GSDMD), into active mature peptides. Plays a key role in cell immunity as an inflammatory response initiator: once activated through formation of an inflammasome complex, it initiates a pro-inflammatory response through the cleavage of the two inflammatory cytokines IL1B and IL18, releasing the mature cytokines which are involved in a variety of inflammatory processes. Cleaves a tetrapeptide after an Asp residue at position P1. Also initiates pyroptosis, a programmed lytic cell death pathway, through cleavage of GSDMD. In contrast to cleavage of interleukin IL1B, recognition and cleavage of GSDMD is not strictly dependent on the consensus cleavage site but depends on an exosite interface on CASP1 that recognizes and binds the Gasdermin-D, C-terminal (GSDMD-CT) part. Cleaves and activates CASP7 in response to bacterial infection, promoting plasma membrane repair. Upon inflammasome activation, during DNA virus infection but not RNA virus challenge, controls antiviral immunity through the cleavage of CGAS, rendering it inactive. In apoptotic cells, cleaves SPHK2 which is released from cells and remains enzymatically active extracellularly. This chain is Caspase-1 (Casp1), found in Rattus norvegicus (Rat).